The chain runs to 293 residues: Protease HtpX (293 aa).

2 consecutive transmembrane segments (helical) span residues 4–24 and 34–54; these read IALFLLTNLAVMVVFGLVLSL and GLMIMALLFGFGGSFVSLLMS. Residue His139 participates in Zn(2+) binding. Glu140 is a catalytic residue. His143 contributes to the Zn(2+) binding site. A run of 2 helical transmembrane segments spans residues 158-178 and 193-213; these read VVNTFVIFISRILAQLAAGFM and LIYFAVATVLELVFGILASII. Zn(2+) is bound at residue Glu222.

It belongs to the peptidase M48B family. Zn(2+) is required as a cofactor.

It localises to the cell inner membrane. In Escherichia coli O127:H6 (strain E2348/69 / EPEC), this protein is Protease HtpX.